The primary structure comprises 115 residues: Parathyroid hormone (115 aa).

A signal peptide spans 1–25 (MMSAKDMVKVMIVMLAICFLARSDG). A propeptide spanning residues 26-31 (KSVKKR) is cleaved from the precursor. The interval 51–69 (RVEWLRKKLQDVHNFVALG) is important for receptor binding. A disordered region spans residues 77-99 (GSSQRPRKKEDNVLVESHQKSLG). Positions 84 to 99 (KKEDNVLVESHQKSLG) are enriched in basic and acidic residues.

The protein belongs to the parathyroid hormone family. As to quaternary structure, interacts with PTH1R (via N-terminal extracellular domain).

It is found in the secreted. Functionally, parathyroid hormone elevates calcium level by dissolving the salts in bone and preventing their renal excretion. Acts by binding to its receptor, PTH1R, activating G protein-coupled receptor signaling. Stimulates [1-14C]-2-deoxy-D-glucose (2DG) transport and glycogen synthesis in osteoblastic cells. This Bos taurus (Bovine) protein is Parathyroid hormone.